The chain runs to 631 residues: Tumor protein p73 (631 aa).

The tract at residues 1 to 43 is transactivation; that stretch reads MAQTSSSSSSTFEHLWSSLEPDSTYFDLPQPSQGTSEASGSEE. Disordered stretches follow at residues 23-43 and 69-113; these read STYF…GSEE and SRAA…NTDY. Phosphothreonine; by PLK1 is present on Thr-24. The residue at position 25 (Tyr-25) is a Phosphotyrosine; by SRC and HCK. Polar residues-rich tracts occupy residues 30–43 and 86–100; these read QPSQ…GSEE and PTHS…TFDT. Tyr-91 bears the Phosphotyrosine; by ABL1 mark. The segment at 123–302 is DNA-binding; the sequence is FQQSSTAKSA…DRKADEDHYR (180 aa). Positions 186, 189, 250, and 254 each coordinate Zn(2+). Residues 306–315 are compositionally biased toward polar residues; that stretch reads ALNESTTKNG. The segment at 306 to 334 is disordered; that stretch reads ALNESTTKNGAASKRAFKQSPPAIPALGT. Positions 337-372 are interaction with HIPK2; that stretch reads KKRRHGDEDMFYMHVRGRENFEILMKVKESLELMEL. The segment at 337–378 is oligomerization; that stretch reads KKRRHGDEDMFYMHVRGRENFEILMKVKESLELMELVPQPLV. Residues 477–481 carry the PPxY motif motif; sequence PPPPY. The SAM domain maps to 479–545; it reads PPYHADPSLV…WRGLQDLKQS (67 aa). Lys-622 is covalently cross-linked (Glycyl lysine isopeptide (Lys-Gly) (interchain with G-Cter in SUMO); alternate). Lys-622 participates in a covalent cross-link: Glycyl lysine isopeptide (Lys-Gly) (interchain with G-Cter in SUMO2); alternate.

Belongs to the p53 family. In terms of assembly, found in a complex with p53/TP53 and CABLES1. The C-terminal oligomerization domain binds to the ABL1 tyrosine kinase SH3 domain. Interacts with HECW2, HIPK2, RANBP9 and WWOX. Interacts (via SAM domain) with FBXO45 (via B30.2/SPRY domain). Interacts with YAP1 (phosphorylated form). Interacts with HCK (via SH3 domain); this inhibits TP73 activity and degradation. Interacts (via SAM domain) with NQO1; this interaction is NADH-dependent, stabilizes TP73 in response to oxidative stress and protects it from ubiquitin-independent degradation by the 20S proteasome. Zn(2+) serves as cofactor. In terms of processing, sumoylated on Lys-622, which potentiates proteasomal degradation but does not affect transcriptional activity. Phosphorylation by PLK1 and PLK3 inhibits the transcription regulator activity and pro-apoptotic function. Higher levels of phosphorylation seen in striatal neurons of. mutant huntingtin (htt) transgenic mice. Post-translationally, polyubiquitinated by RCHY1/PIRH2; leading to its degradation by the proteasome. In terms of tissue distribution, found in striatal neurons of mutant huntingtin (htt) transgenic mice (at protein level). Isoform 1 is expressed in the nasal epithelium, the vomeronasal organ, the hippocampus and the hypothalamus.

The protein localises to the nucleus. Its subcellular location is the cytoplasm. Participates in the apoptotic response to DNA damage. Isoforms containing the transactivation domain are pro-apoptotic, isoforms lacking the domain are anti-apoptotic and block the function of p53 and transactivating p73 isoforms. May be a tumor suppressor protein. Is an activator of FOXJ1 expression, essential for the positive regulation of lung ciliated cell differentiation. This Mus musculus (Mouse) protein is Tumor protein p73 (Tp73).